We begin with the raw amino-acid sequence, 218 residues long: Adenylate kinase (218 aa).

10–15 (GAGKGT) serves as a coordination point for ATP. Positions 30-59 (STGDMLRAAVKAGTPLGIAAKKIMDEGGLV) are NMP. AMP is bound by residues Thr31, Arg36, 57–59 (GLV), 85–88 (GFPR), and Gln92. Positions 122–159 (GRRVHPASGRTYHVKFNPPKVAGRDDVTGEELIQRDDD) are LID. Residues Arg123 and 132–133 (TY) each bind ATP. Residues Arg156 and Arg167 each contribute to the AMP site. Position 203 (Gly203) interacts with ATP.

Belongs to the adenylate kinase family. Monomer.

It is found in the cytoplasm. It catalyses the reaction AMP + ATP = 2 ADP. It functions in the pathway purine metabolism; AMP biosynthesis via salvage pathway; AMP from ADP: step 1/1. Its function is as follows. Catalyzes the reversible transfer of the terminal phosphate group between ATP and AMP. Plays an important role in cellular energy homeostasis and in adenine nucleotide metabolism. This is Adenylate kinase from Herminiimonas arsenicoxydans.